Consider the following 456-residue polypeptide: E3 ubiquitin-protein ligase PUB24 (456 aa).

Residues 9–83 (EIPNYFICPI…QHWCVENETR (75 aa)) enclose the U-box domain.

In terms of processing, auto-ubiquitinated.

It catalyses the reaction S-ubiquitinyl-[E2 ubiquitin-conjugating enzyme]-L-cysteine + [acceptor protein]-L-lysine = [E2 ubiquitin-conjugating enzyme]-L-cysteine + N(6)-ubiquitinyl-[acceptor protein]-L-lysine.. Its pathway is protein modification; protein ubiquitination. E3 ubiquitin-protein ligase that acts as a negative regulator of the immunity triggered by the pathogen-associated molecular patterns (PAMPs), in association with PUB22 and PUB23. This Arabidopsis thaliana (Mouse-ear cress) protein is E3 ubiquitin-protein ligase PUB24 (PUB24).